Consider the following 82-residue polypeptide: MDLSNRTVVQVVVLALVAQVTLSQHWSYGWLPGGKRSVGELEATIKMMDTGGVVALPEETSAHVSERLRPYDVILKKWMPHK.

Positions 1–23 (MDLSNRTVVQVVVLALVAQVTLS) are cleaved as a signal peptide. Gln-24 carries the post-translational modification Pyrrolidone carboxylic acid. Gly-33 is modified (glycine amide).

This sequence belongs to the GnRH family. As to expression, brain.

Its subcellular location is the secreted. Stimulates the secretion of gonadotropins. In Oncorhynchus nerka (Sockeye salmon), this protein is Progonadoliberin-3 (gnrh3).